The primary structure comprises 260 residues: CD40 ligand (260 aa).

Residues 1–22 (MIETYSQPSPRSVATGLPASMK) are Cytoplasmic-facing. Residues 23-46 (IFMYLLTVFLITQMIGSVLFAVYL) traverse the membrane as a helical; Signal-anchor for type II membrane protein segment. Over 47–260 (HRRLDKVEEE…GFSSFGLLKL (214 aa)) the chain is Extracellular. A THD domain is found at 121 to 260 (IAAHVVSEAN…GFSSFGLLKL (140 aa)). Cysteine 177 and cysteine 217 form a disulfide bridge. N-linked (GlcNAc...) asparagine glycosylation is present at asparagine 239.

This sequence belongs to the tumor necrosis factor family. As to quaternary structure, homotrimer. Interacts with CD28. CD40 ligand, soluble form: Exists as either a monomer or a homotrimer. Forms a ternary complex between CD40 and integrins for CD40-CD40LG signaling. The soluble form derives from the membrane form by proteolytic processing. In terms of tissue distribution, specifically expressed on activated CD4+ T-lymphocytes.

It localises to the cell membrane. The protein localises to the cell surface. The protein resides in the secreted. Its function is as follows. Cytokine that acts as a ligand to CD40/TNFRSF5. Costimulates T-cell proliferation and cytokine production. Its cross-linking on T-cells generates a costimulatory signal which enhances the production of IL4 and IL10 in conjunction with the TCR/CD3 ligation and CD28 costimulation. Induces the activation of NF-kappa-B. Induces the activation of kinases MAPK8 and PAK2 in T-cells. Mediates B-cell proliferation in the absence of co-stimulus as well as IgE production in the presence of IL4. Involved in immunoglobulin class switching. Functionally, acts as a ligand for integrins, specifically ITGA5:ITGB1 and ITGAV:ITGB3; both integrins and the CD40 receptor are required for activation of CD40-CD40LG signaling, which have cell-type dependent effects, such as B-cell activation, NF-kappa-B signaling and anti-apoptotic signaling. The sequence is that of CD40 ligand (Cd40lg) from Mus musculus (Mouse).